Reading from the N-terminus, the 228-residue chain is Cytidylate kinase (228 aa).

11 to 19 (GPASAGKST) serves as a coordination point for ATP.

Belongs to the cytidylate kinase family. Type 1 subfamily.

It localises to the cytoplasm. The enzyme catalyses CMP + ATP = CDP + ADP. It catalyses the reaction dCMP + ATP = dCDP + ADP. The polypeptide is Cytidylate kinase (Limosilactobacillus reuteri (strain DSM 20016) (Lactobacillus reuteri)).